A 346-amino-acid polypeptide reads, in one-letter code: Dihydroorotase (346 aa).

H13 and H15 together coordinate Zn(2+). Substrate contacts are provided by residues H15–R17 and N41. The Zn(2+) site is built by K99, H136, and H174. K99 is subject to N6-carboxylysine. Residue H136 participates in substrate binding. Position 219 (L219) interacts with substrate. D247 serves as a coordination point for Zn(2+). D247 is a catalytic residue. Substrate-binding residues include H251 and A263.

Belongs to the metallo-dependent hydrolases superfamily. DHOase family. Class II DHOase subfamily. Homodimer. The cofactor is Zn(2+).

It catalyses the reaction (S)-dihydroorotate + H2O = N-carbamoyl-L-aspartate + H(+). The protein operates within pyrimidine metabolism; UMP biosynthesis via de novo pathway; (S)-dihydroorotate from bicarbonate: step 3/3. Functionally, catalyzes the reversible cyclization of carbamoyl aspartate to dihydroorotate. This Picosynechococcus sp. (strain ATCC 27264 / PCC 7002 / PR-6) (Agmenellum quadruplicatum) protein is Dihydroorotase.